Here is a 278-residue protein sequence, read N- to C-terminus: 4-diphosphocytidyl-2-C-methyl-D-erythritol kinase (278 aa).

Residue K9 is part of the active site. 93–103 (PLGGGLGGGSS) provides a ligand contact to ATP. The active site involves D135.

The protein belongs to the GHMP kinase family. IspE subfamily.

The enzyme catalyses 4-CDP-2-C-methyl-D-erythritol + ATP = 4-CDP-2-C-methyl-D-erythritol 2-phosphate + ADP + H(+). Its pathway is isoprenoid biosynthesis; isopentenyl diphosphate biosynthesis via DXP pathway; isopentenyl diphosphate from 1-deoxy-D-xylulose 5-phosphate: step 3/6. Its function is as follows. Catalyzes the phosphorylation of the position 2 hydroxy group of 4-diphosphocytidyl-2C-methyl-D-erythritol. The protein is 4-diphosphocytidyl-2-C-methyl-D-erythritol kinase of Nitrosomonas europaea (strain ATCC 19718 / CIP 103999 / KCTC 2705 / NBRC 14298).